A 614-amino-acid chain; its full sequence is Leucine-rich repeat protein soc-2 homolog (614 aa).

Disordered regions lie at residues 1–29 and 44–79; these read MNLCSSAGATASTSSLSSSGHVESNSSGP and NSGGSGRADTALNQSNRSTVNGGGGNPTNSNGPNLT. 20 LRR repeats span residues 134–155, 157–178, 180–201, 203–224, 226–247, 249–270, 272–293, 295–316, 318–340, 341–362, 365–386, 389–410, 413–434, 436–457, 459–480, 482–503, 505–526, 528–549, 551–573, and 575–596; these read GIKRLDLSKSSITVLPNTVREC, HLTELYLYSNKIGQLPTEIGCL, NLRNLALNENSLTSLPESLKHC, QLKVLDLRHNKLAEIPSVIYRL, SLTTLYLRFNRITAVADDLRQL, NLTMLSLRENKIKELGSAIGAL, NLTTLDVSHNHLEHLPDDIGNC, NLSALDLQHNELLDIPDSIGNL, SLVRLGLRYNRLNSVPISLKNCK, SMDEFNVEGNGITQLPDGMLAS, ALTTITLSRNQFTSYPTGGPAQ, NVYSINLEHNRIDKIPYGIFSR, GLTKLNMKENMLTALPLDVGTW, NMVELNLATNALQKLPDDIMNL, NLEILILSNNMLKKIPNTIGNL, KLRILDLEENRIEVLPHEIGLL, ELQRLILQTNQITMLPRSIGHL, NLTHLSVSENNLQFLPEEIGSL, SLENLYINQNPGLEKLPFELALC, and NLKYLNIDKCPLGTIPPEIQAG.

It belongs to the SHOC2 family.

In terms of biological role, acts as a Ras effector and participates in MAPK pathway activation. Probably acts as a regulatory subunit of protein phosphatase that specifically dephosphorylates Raf kinase and stimulate Raf activity at specialized signaling complexes upon Ras activation. The sequence is that of Leucine-rich repeat protein soc-2 homolog (Sur-8) from Drosophila virilis (Fruit fly).